Here is a 152-residue protein sequence, read N- to C-terminus: uncharacterized protein (152 aa).

Belongs to the antirestriction protein family.

This is an uncharacterized protein from Escherichia coli (strain K12).